A 473-amino-acid polypeptide reads, in one-letter code: Zinc finger and SCAN domain-containing protein 21 (473 aa).

Lys27 is covalently cross-linked (Glycyl lysine isopeptide (Lys-Gly) (interchain with G-Cter in SUMO2)). The region spanning 45 to 127 is the SCAN box domain; sequence RQRFRQFGYH…TLLEDLEREL (83 aa). Residues 127 to 167 are disordered; it reads LDEPGHQVSTPPNEQKPVWEKISSSGTAKESPSSMQPQPLE. Over residues 148-165 the composition is skewed to polar residues; the sequence is ISSSGTAKESPSSMQPQP. Glycyl lysine isopeptide (Lys-Gly) (interchain with G-Cter in SUMO2) cross-links involve residues Lys221 and Lys232. Positions 244–272 are disordered; it reads LENEKGTKPPLQEAGSKKGRESVPTKPTP. The span at 258–272 shows a compositional bias: basic and acidic residues; sequence GSKKGRESVPTKPTP. C2H2-type zinc fingers lie at residues 277 to 299, 305 to 327, 333 to 354, 360 to 382, 388 to 410, 416 to 438, and 444 to 466; these read YICA…RRTH, YVCT…YRTH, YDCK…QRMH, YQCK…YRIH, YQCN…QRLH, YKCK…HRIH, and YWCH…QRVH. Lys349 is covalently cross-linked (Glycyl lysine isopeptide (Lys-Gly) (interchain with G-Cter in SUMO2)).

This sequence belongs to the krueppel C2H2-type zinc-finger protein family.

The protein localises to the nucleus. In terms of biological role, strong transcriptional activator. Plays an important role in spermatogenesis; essential for the progression of meiotic prophase I in spermatocytes. This is Zinc finger and SCAN domain-containing protein 21 (ZSCAN21) from Pan troglodytes (Chimpanzee).